The sequence spans 304 residues: Oxygen-dependent coproporphyrinogen-III oxidase (304 aa).

Ser93 is a substrate binding site. A divalent metal cation-binding residues include His97 and His107. The active-site Proton donor is the His107. Position 109-111 (109-111 (NVR)) interacts with substrate. A divalent metal cation-binding residues include His146 and His176. Residues 241-276 (YVEFNLVYDRGTLFGLQSGGRTESILMSLPPQVRWG) form an important for dimerization region. 259-261 (GGR) is a substrate binding site.

The protein belongs to the aerobic coproporphyrinogen-III oxidase family. As to quaternary structure, homodimer. A divalent metal cation serves as cofactor.

The protein localises to the cytoplasm. The enzyme catalyses coproporphyrinogen III + O2 + 2 H(+) = protoporphyrinogen IX + 2 CO2 + 2 H2O. The protein operates within porphyrin-containing compound metabolism; protoporphyrin-IX biosynthesis; protoporphyrinogen-IX from coproporphyrinogen-III (O2 route): step 1/1. Its function is as follows. Involved in the heme biosynthesis. Catalyzes the aerobic oxidative decarboxylation of propionate groups of rings A and B of coproporphyrinogen-III to yield the vinyl groups in protoporphyrinogen-IX. The polypeptide is Oxygen-dependent coproporphyrinogen-III oxidase (Pseudomonas syringae pv. tomato (strain ATCC BAA-871 / DC3000)).